A 237-amino-acid chain; its full sequence is Myb-related protein MYBAS1 (237 aa).

2 HTH myb-type domains span residues 5-57 (REEM…VNYL) and 58-112 (HPGL…RKKA). A DNA-binding region (H-T-H motif) is located at residues 33 to 57 (WDFVAKVSGLNRTGKSCRLRWVNYL). Residues 62–65 (KHGR) carry the Bipartite nuclear localization signal 1 motif. A DNA-binding region (H-T-H motif) is located at residues 85 to 108 (WSRIARRLPGRTDNEIKNYWRTHM). Residues 109–117 (RKKAQERRG) carry the Bipartite nuclear localization signal 2 motif.

The protein localises to the nucleus. Its function is as follows. Transcription factor. The protein is Myb-related protein MYBAS1 (MYBAS1) of Oryza sativa subsp. japonica (Rice).